Consider the following 565-residue polypeptide: Proline--tRNA ligase (565 aa).

The protein belongs to the class-II aminoacyl-tRNA synthetase family. ProS type 1 subfamily. In terms of assembly, homodimer.

It localises to the cytoplasm. It carries out the reaction tRNA(Pro) + L-proline + ATP = L-prolyl-tRNA(Pro) + AMP + diphosphate. Functionally, catalyzes the attachment of proline to tRNA(Pro) in a two-step reaction: proline is first activated by ATP to form Pro-AMP and then transferred to the acceptor end of tRNA(Pro). As ProRS can inadvertently accommodate and process non-cognate amino acids such as alanine and cysteine, to avoid such errors it has two additional distinct editing activities against alanine. One activity is designated as 'pretransfer' editing and involves the tRNA(Pro)-independent hydrolysis of activated Ala-AMP. The other activity is designated 'posttransfer' editing and involves deacylation of mischarged Ala-tRNA(Pro). The misacylated Cys-tRNA(Pro) is not edited by ProRS. The chain is Proline--tRNA ligase from Francisella tularensis subsp. novicida (strain U112).